The chain runs to 268 residues: Small ribosomal subunit protein eS1 (268 aa).

The interval 1 to 21 is disordered; sequence MAVGKNKGLSKGGKKGGKKKV.

Belongs to the eukaryotic ribosomal protein eS1 family. In terms of assembly, component of the small ribosomal subunit. Mature ribosomes consist of a small (40S) and a large (60S) subunit. The 40S subunit contains about 33 different proteins and 1 molecule of RNA (18S). The 60S subunit contains about 49 different proteins and 3 molecules of RNA (28S, 5.8S and 5S).

The protein localises to the cytoplasm. Functionally, essential for oogenesis; required for late follicle cell development. The sequence is that of Small ribosomal subunit protein eS1 from Drosophila erecta (Fruit fly).